Here is a 533-residue protein sequence, read N- to C-terminus: D-3-phosphoglycerate dehydrogenase (533 aa).

An N-acetylalanine modification is found at Ala-2. A Phosphoserine modification is found at Ser-14. Residue Lys-21 is modified to N6-acetyllysine; alternate. Residue Lys-21 forms a Glycyl lysine isopeptide (Lys-Gly) (interchain with G-Cter in SUMO1); alternate linkage. Residue Lys-21 forms a Glycyl lysine isopeptide (Lys-Gly) (interchain with G-Cter in SUMO2); alternate linkage. Lys-58 bears the N6-acetyllysine mark. Residues Thr-78, 155 to 156 (RI), Asp-175, Thr-207, 234 to 236 (CAR), and Asp-260 contribute to the NAD(+) site. The residue at position 78 (Thr-78) is a Phosphothreonine. Arg-236 is a catalytic residue. Residue Glu-265 is part of the active site. The active-site Proton donor is the His-283. 283-286 (HLGA) serves as a coordination point for NAD(+).

The protein belongs to the D-isomer specific 2-hydroxyacid dehydrogenase family. In terms of assembly, homotetramer. As to expression, liver, kidney, brain, testis.

The enzyme catalyses (2R)-3-phosphoglycerate + NAD(+) = 3-phosphooxypyruvate + NADH + H(+). The protein operates within amino-acid biosynthesis; L-serine biosynthesis; L-serine from 3-phospho-D-glycerate: step 1/3. Its function is as follows. Catalyzes the reversible oxidation of 3-phospho-D-glycerate to 3-phosphonooxypyruvate, the first step of the phosphorylated L-serine biosynthesis pathway. Does not catalyze the reversible oxidation of 2-hydroxyglutarate to 2-oxoglutarate and the reversible oxidation of (S)-malate to oxaloacetate. This chain is D-3-phosphoglycerate dehydrogenase (Phgdh), found in Rattus norvegicus (Rat).